Consider the following 724-residue polypeptide: Golgin subfamily A member 6-like protein 6 (724 aa).

Disordered regions lie at residues 1–108, 314–342, 374–454, 517–548, and 561–724; these read MLMW…HQEA, QEEK…MRRQ, MHEQ…EMWR, QEEM…KMWR, and WRQE…MQEH. Basic residues predominate over residues 15–29; that stretch reads LPTHPHLPTHPHLPT. Over residues 39-60 the composition is skewed to basic and acidic residues; sequence MSKETRQSKLAEAKEQLTDHHP. Polar residues-rich tracts occupy residues 61–71 and 79–91; these read QTNPSVGTAAS and NNGT…TSGG. A compositionally biased stretch (basic and acidic residues) spans 94–108; it reads SPEDEQKASHQHQEA. Residues 164 to 686 adopt a coiled-coil conformation; that stretch reads ELEQALSAVA…EKMWEQEEKM (523 aa).

The protein belongs to the GOLGA6 family.

In Homo sapiens (Human), this protein is Golgin subfamily A member 6-like protein 6 (GOLGA6L6).